The chain runs to 81 residues: Omega-conotoxin-like TxO4 (81 aa).

The N-terminal stretch at 1–22 is a signal peptide; sequence MKLTCVVIVAVLFLTAWTFVTA. Residues 23–52 constitute a propeptide that is removed on maturation; the sequence is VPHSSNALENLYLKARHEMENPEASKLNTR. 3 disulfide bridges follow: C55–C72, C62–C76, and C71–C80. 4-hydroxyproline; partial is present on P70. The residue at position 75 (W75) is a 6'-bromotryptophan; partial.

The protein belongs to the conotoxin O1 superfamily. In terms of processing, txO4 is found with and without hydroxyproline and these two forms have a bromotryptophan. Truncated TxO4 is found with and without bromotryptophan, and these two forms have no hydroxyproline. In terms of tissue distribution, expressed by the venom duct.

The protein resides in the secreted. Its function is as follows. Omega-conotoxins act at presynaptic membranes, they bind and block voltage-gated calcium channels (Cav). This Conus textile (Cloth-of-gold cone) protein is Omega-conotoxin-like TxO4.